A 347-amino-acid chain; its full sequence is Ribosomal RNA small subunit methyltransferase C (347 aa).

It belongs to the methyltransferase superfamily. RsmC family. As to quaternary structure, monomer.

Its subcellular location is the cytoplasm. The catalysed reaction is guanosine(1207) in 16S rRNA + S-adenosyl-L-methionine = N(2)-methylguanosine(1207) in 16S rRNA + S-adenosyl-L-homocysteine + H(+). Specifically methylates the guanine in position 1207 of 16S rRNA in the 30S particle. This chain is Ribosomal RNA small subunit methyltransferase C, found in Shewanella baltica (strain OS195).